Reading from the N-terminus, the 63-residue chain is MSQEKVQRHGGGDGEEESGPEAAGQERREKLGEDVDAILDEIDDVLEENAEDFVRAYVQKGGQ.

Basic and acidic residues-rich tracts occupy residues 1–12 and 24–33; these read MSQEKVQRHGGG and GQERREKLGE. The interval 1–35 is disordered; the sequence is MSQEKVQRHGGGDGEEESGPEAAGQERREKLGEDV. The ARC ATPase binding stretch occupies residues 20–57; sequence PEAAGQERREKLGEDVDAILDEIDDVLEENAEDFVRAY. Residues 25–51 are a coiled coil; sequence QERREKLGEDVDAILDEIDDVLEENAE. Gln-63 bears the Deamidated glutamine mark. Residue Gln-63 forms an Isoglutamyl lysine isopeptide (Gln-Lys) (interchain with K-? in acceptor proteins) linkage.

Belongs to the prokaryotic ubiquitin-like protein family. In terms of assembly, strongly interacts with the proteasome-associated ATPase ARC through a hydrophobic interface; the interacting region of Pup lies in its C-terminal half. There is one Pup binding site per ARC hexamer ring. Is modified by deamidation of its C-terminal glutamine to glutamate by the deamidase Dop, a prerequisite to the subsequent pupylation process.

It functions in the pathway protein degradation; proteasomal Pup-dependent pathway. Its function is as follows. Protein modifier that is covalently attached to lysine residues of substrate proteins, thereby targeting them for proteasomal degradation. The tagging system is termed pupylation. This Saccharopolyspora erythraea (strain ATCC 11635 / DSM 40517 / JCM 4748 / NBRC 13426 / NCIMB 8594 / NRRL 2338) protein is Prokaryotic ubiquitin-like protein Pup 1.